We begin with the raw amino-acid sequence, 72 residues long: DNA-directed RNA polymerase subunit omega (72 aa).

Belongs to the RNA polymerase subunit omega family. As to quaternary structure, the RNAP catalytic core consists of 2 alpha, 1 beta, 1 beta' and 1 omega subunit. When a sigma factor is associated with the core the holoenzyme is formed, which can initiate transcription.

It catalyses the reaction RNA(n) + a ribonucleoside 5'-triphosphate = RNA(n+1) + diphosphate. Functionally, promotes RNA polymerase assembly. Latches the N- and C-terminal regions of the beta' subunit thereby facilitating its interaction with the beta and alpha subunits. The sequence is that of DNA-directed RNA polymerase subunit omega from Petrotoga mobilis (strain DSM 10674 / SJ95).